Here is a 273-residue protein sequence, read N- to C-terminus: NAD-dependent protein deacylase (273 aa).

Residues 20-272 form the Deacetylase sirtuin-type domain; that stretch reads RERLRQRIFF…PEFVEKLLEG (253 aa). 48–67 serves as a coordination point for NAD(+); sequence GAGISAESGIRTFRAADGLW. Substrate contacts are provided by Y92 and R95. Residue 129–132 participates in NAD(+) binding; the sequence is QNID. H147 (proton acceptor) is an active-site residue. Residues C155 and C174 each contribute to the Zn(2+) site. NAD(+)-binding positions include 214–216, 240–242, and A258; these read GTS and NLE.

It belongs to the sirtuin family. Class III subfamily. It depends on Zn(2+) as a cofactor.

It localises to the cytoplasm. It catalyses the reaction N(6)-acetyl-L-lysyl-[protein] + NAD(+) + H2O = 2''-O-acetyl-ADP-D-ribose + nicotinamide + L-lysyl-[protein]. The catalysed reaction is N(6)-succinyl-L-lysyl-[protein] + NAD(+) + H2O = 2''-O-succinyl-ADP-D-ribose + nicotinamide + L-lysyl-[protein]. The enzyme catalyses N(6)-(2-hydroxyisobutanoyl)-L-lysyl-[protein] + NAD(+) + H2O = 2''-O-(2-hydroxyisobutanoyl)-ADP-D-ribose + nicotinamide + L-lysyl-[protein]. Its function is as follows. NAD-dependent lysine deacetylase that specifically removes acetyl groups on target proteins. Also acts as a protein-lysine deacylase by mediating protein desuccinylation and de-2-hydroxyisobutyrylation. Modulates the activities of several proteins which are inactive in their acylated form. In Shigella flexneri, this protein is NAD-dependent protein deacylase.